The primary structure comprises 403 residues: F-box only protein 22 (403 aa).

Residue Met-1 is modified to N-acetylmethionine. The F-box domain occupies 21-67 (FVLSNLAEVVERVLTFLPAKALLRVACVCRLWRECVRRVLRTHRSVT). Thr-127 is modified (phosphothreonine). Ser-128 carries the post-translational modification Phosphoserine. The residue at position 194 (Lys-194) is an N6-acetyllysine.

As to quaternary structure, directly interacts with SKP1 and CUL1. Interacts (via C-terminal) with KDM4A. Interacts with TP53. Interacts with MTOR; this interaction promotes 'lys-27'-linked ubiquitination of MTOR. In terms of assembly, (Microbial infection) Interacts with SARS_COV-2 protein NSP5; this interaction attenuates NSP5-mediated inhibition of innate immunity. Post-translationally, phosphorylated by EIF2AK4 at Thr-127 causes cytoplasmic retention of FBXO22. As to expression, predominantly expressed in liver, also enriched in cardiac muscle.

Its subcellular location is the cytoplasm. The protein resides in the nucleus. It localises to the myofibril. It is found in the sarcomere. The protein localises to the z line. Functionally, substrate-recognition component of the SCF (SKP1-CUL1-F-box protein)-type E3 ubiquitin ligase complex that is implicated in the control of various cellular processes such as cell cycle control, transcriptional regulation, DNA damage repair, and apoptosis. Promotes the proteasome-dependent degradation of key sarcomeric proteins, such as alpha-actinin (ACTN2) and filamin-C (FLNC), essential for maintenance of normal contractile function. Acts as a key regulator of histone methylation marks namely H3K9 and H3K36 methylation through the regulation of histone demethylase KDM4A protein levels. In complex with KDM4A, also regulates the abundance of TP53 by targeting methylated TP53 for degradation at the late senescent stage. Under oxidative stress, promotes the ubiquitination and degradation of BACH1. Mechanistically, reactive oxygen species (ROS) covalently modify cysteine residues on the bZIP domain of BACH1, leading to its release from chromatin and making it accessible to FBXO22. Upon amino acid depletion, mediates 'Lys-27'-linked ubiquitination of MTOR and thereby inhibits substrate recruitment to mTORC1. Also inhibits SARS-CoV-2 replication by inducing NSP5 degradation. The protein is F-box only protein 22 (FBXO22) of Homo sapiens (Human).